Consider the following 206-residue polypeptide: uncharacterized protein (206 aa).

Residues 1–18 (MKTYSLLLGLFISFGVLA) form the signal peptide.

This is an uncharacterized protein from Haemophilus influenzae (strain ATCC 51907 / DSM 11121 / KW20 / Rd).